The sequence spans 235 residues: Phosphoribosylaminoimidazole-succinocarboxamide synthase (235 aa).

It belongs to the SAICAR synthetase family.

The enzyme catalyses 5-amino-1-(5-phospho-D-ribosyl)imidazole-4-carboxylate + L-aspartate + ATP = (2S)-2-[5-amino-1-(5-phospho-beta-D-ribosyl)imidazole-4-carboxamido]succinate + ADP + phosphate + 2 H(+). It participates in purine metabolism; IMP biosynthesis via de novo pathway; 5-amino-1-(5-phospho-D-ribosyl)imidazole-4-carboxamide from 5-amino-1-(5-phospho-D-ribosyl)imidazole-4-carboxylate: step 1/2. The polypeptide is Phosphoribosylaminoimidazole-succinocarboxamide synthase (Clostridium kluyveri (strain NBRC 12016)).